The following is an 88-amino-acid chain: Small ribosomal subunit protein uS17 (88 aa).

This sequence belongs to the universal ribosomal protein uS17 family. As to quaternary structure, part of the 30S ribosomal subunit.

One of the primary rRNA binding proteins, it binds specifically to the 5'-end of 16S ribosomal RNA. This Azotobacter vinelandii (strain DJ / ATCC BAA-1303) protein is Small ribosomal subunit protein uS17.